A 626-amino-acid chain; its full sequence is DNA mismatch repair protein MutL (626 aa).

This sequence belongs to the DNA mismatch repair MutL/HexB family.

Its function is as follows. This protein is involved in the repair of mismatches in DNA. It is required for dam-dependent methyl-directed DNA mismatch repair. May act as a 'molecular matchmaker', a protein that promotes the formation of a stable complex between two or more DNA-binding proteins in an ATP-dependent manner without itself being part of a final effector complex. The chain is DNA mismatch repair protein MutL from Pelodictyon phaeoclathratiforme (strain DSM 5477 / BU-1).